A 185-amino-acid polypeptide reads, in one-letter code: Ribosome-recycling factor (185 aa).

This sequence belongs to the RRF family.

The protein resides in the cytoplasm. In terms of biological role, responsible for the release of ribosomes from messenger RNA at the termination of protein biosynthesis. May increase the efficiency of translation by recycling ribosomes from one round of translation to another. The polypeptide is Ribosome-recycling factor (Erwinia tasmaniensis (strain DSM 17950 / CFBP 7177 / CIP 109463 / NCPPB 4357 / Et1/99)).